The sequence spans 403 residues: Methylthioribose-1-phosphate isomerase (403 aa).

D280 serves as the catalytic Proton donor.

This sequence belongs to the eIF-2B alpha/beta/delta subunits family. MtnA subfamily.

It is found in the cytoplasm. It localises to the nucleus. It catalyses the reaction 5-(methylsulfanyl)-alpha-D-ribose 1-phosphate = 5-(methylsulfanyl)-D-ribulose 1-phosphate. It functions in the pathway amino-acid biosynthesis; L-methionine biosynthesis via salvage pathway; L-methionine from S-methyl-5-thio-alpha-D-ribose 1-phosphate: step 1/6. Catalyzes the interconversion of methylthioribose-1-phosphate (MTR-1-P) into methylthioribulose-1-phosphate (MTRu-1-P). The polypeptide is Methylthioribose-1-phosphate isomerase (Eremothecium gossypii (strain ATCC 10895 / CBS 109.51 / FGSC 9923 / NRRL Y-1056) (Yeast)).